Reading from the N-terminus, the 466-residue chain is 3-isopropylmalate dehydratase large subunit (466 aa).

The [4Fe-4S] cluster site is built by C347, C407, and C410.

The protein belongs to the aconitase/IPM isomerase family. LeuC type 1 subfamily. In terms of assembly, heterodimer of LeuC and LeuD. Requires [4Fe-4S] cluster as cofactor.

The enzyme catalyses (2R,3S)-3-isopropylmalate = (2S)-2-isopropylmalate. It participates in amino-acid biosynthesis; L-leucine biosynthesis; L-leucine from 3-methyl-2-oxobutanoate: step 2/4. In terms of biological role, catalyzes the isomerization between 2-isopropylmalate and 3-isopropylmalate, via the formation of 2-isopropylmaleate. The chain is 3-isopropylmalate dehydratase large subunit from Shigella flexneri.